Here is a 318-residue protein sequence, read N- to C-terminus: Methenyltetrahydromethanopterin cyclohydrolase (318 aa).

The protein belongs to the MCH family.

The protein localises to the cytoplasm. It carries out the reaction 5,10-methenyl-5,6,7,8-tetrahydromethanopterin + H2O = N(5)-formyl-5,6,7,8-tetrahydromethanopterin + H(+). Its pathway is one-carbon metabolism; methanogenesis from CO(2); 5,10-methenyl-5,6,7,8-tetrahydromethanopterin from CO(2): step 3/3. In terms of biological role, catalyzes the reversible interconversion of 5-formyl-H(4)MPT to methenyl-H(4)MPT(+). In Methanocella arvoryzae (strain DSM 22066 / NBRC 105507 / MRE50), this protein is Methenyltetrahydromethanopterin cyclohydrolase.